Reading from the N-terminus, the 376-residue chain is Chaperone protein DnaJ (376 aa).

Positions aspartate 5 to glycine 70 constitute a J domain. Residues glycine 132–serine 210 form a CR-type zinc finger. Zn(2+) is bound by residues cysteine 145, cysteine 148, cysteine 162, cysteine 165, cysteine 184, cysteine 187, cysteine 198, and cysteine 201. CXXCXGXG motif repeat units follow at residues cysteine 145 to glycine 152, cysteine 162 to glycine 169, cysteine 184 to glycine 191, and cysteine 198 to glycine 205.

Belongs to the DnaJ family. Homodimer. The cofactor is Zn(2+).

It localises to the cytoplasm. Functionally, participates actively in the response to hyperosmotic and heat shock by preventing the aggregation of stress-denatured proteins and by disaggregating proteins, also in an autonomous, DnaK-independent fashion. Unfolded proteins bind initially to DnaJ; upon interaction with the DnaJ-bound protein, DnaK hydrolyzes its bound ATP, resulting in the formation of a stable complex. GrpE releases ADP from DnaK; ATP binding to DnaK triggers the release of the substrate protein, thus completing the reaction cycle. Several rounds of ATP-dependent interactions between DnaJ, DnaK and GrpE are required for fully efficient folding. Also involved, together with DnaK and GrpE, in the DNA replication of plasmids through activation of initiation proteins. This Shewanella pealeana (strain ATCC 700345 / ANG-SQ1) protein is Chaperone protein DnaJ.